A 267-amino-acid chain; its full sequence is Undecaprenyl-diphosphatase (267 aa).

The next 8 helical transmembrane spans lie at 1–21 (MSELQIVVLALIQGLTEFLPI), 39–59 (QGLAFDLILNIGTLSAVLIYF), 87–107 (WWILWSTIPAALIGFFGKSLV), 113–133 (SGYVIAVTTTVFGLLLWWADA), 144–164 (TGLKGALFIGFAQVLALIPGT), 189–209 (FLMSIPIIAMASGYDLLKFIL), 219–239 (LFLGAGISFVSAILCIHVFLI), and 244–264 (VGMMPFVIYRLLLGGFLFYIL).

Belongs to the UppP family.

The protein localises to the cell inner membrane. It carries out the reaction di-trans,octa-cis-undecaprenyl diphosphate + H2O = di-trans,octa-cis-undecaprenyl phosphate + phosphate + H(+). In terms of biological role, catalyzes the dephosphorylation of undecaprenyl diphosphate (UPP). Confers resistance to bacitracin. This Psychromonas ingrahamii (strain DSM 17664 / CCUG 51855 / 37) protein is Undecaprenyl-diphosphatase.